The following is a 489-amino-acid chain: Valine--tRNA ligase (489 aa).

The short motif at 482 to 486 (KMSKS) is the 'KMSKS' region element. Residue Lys-485 coordinates ATP.

This sequence belongs to the class-I aminoacyl-tRNA synthetase family.

The enzyme catalyses tRNA(Val) + L-valine + ATP = L-valyl-tRNA(Val) + AMP + diphosphate. This Trichomonas vaginalis protein is Valine--tRNA ligase (VALS).